Reading from the N-terminus, the 368-residue chain is D-alanine--D-alanine ligase (368 aa).

In terms of domain architecture, ATP-grasp spans 145-348 (KRLLQGAGLH…YQDLITTLIE (204 aa)). Residue 175–230 (ADQLGLPLFIKPANQGSSVGVNKATTEAEFTAAIEEAFSYDHKVLIEAAIKGREIE) coordinates ATP. Mg(2+)-binding residues include aspartate 302, glutamate 315, and asparagine 317.

This sequence belongs to the D-alanine--D-alanine ligase family. It depends on Mg(2+) as a cofactor. Mn(2+) is required as a cofactor.

The protein localises to the cytoplasm. It catalyses the reaction 2 D-alanine + ATP = D-alanyl-D-alanine + ADP + phosphate + H(+). It functions in the pathway cell wall biogenesis; peptidoglycan biosynthesis. In terms of biological role, cell wall formation. The polypeptide is D-alanine--D-alanine ligase (Shouchella clausii (strain KSM-K16) (Alkalihalobacillus clausii)).